Here is a 147-residue protein sequence, read N- to C-terminus: Transcriptional repressor NrdR (147 aa).

Residues 3-34 fold into a zinc finger; the sequence is CLFCRSDDTKVIDSRTSEDGISIRRRRECQLC. In terms of domain architecture, ATP-cone spans 46-136; the sequence is LTVIKRNGTS…VYQDFDSLED (91 aa).

The protein belongs to the NrdR family. It depends on Zn(2+) as a cofactor.

Negatively regulates transcription of bacterial ribonucleotide reductase nrd genes and operons by binding to NrdR-boxes. The sequence is that of Transcriptional repressor NrdR from Tropheryma whipplei (strain TW08/27) (Whipple's bacillus).